The primary structure comprises 501 residues: Glucose-6-phosphate isomerase (501 aa).

Residues 78–101 (GIANPTENRAAEHSAERGDGAPES) form a disordered region. The span at 86–97 (RAAEHSAERGDG) shows a compositional bias: basic and acidic residues. Glu-333 serves as the catalytic Proton donor. Catalysis depends on residues His-364 and Lys-474.

Belongs to the GPI family.

It is found in the cytoplasm. It carries out the reaction alpha-D-glucose 6-phosphate = beta-D-fructose 6-phosphate. It participates in carbohydrate biosynthesis; gluconeogenesis. It functions in the pathway carbohydrate degradation; glycolysis; D-glyceraldehyde 3-phosphate and glycerone phosphate from D-glucose: step 2/4. In terms of biological role, catalyzes the reversible isomerization of glucose-6-phosphate to fructose-6-phosphate. This is Glucose-6-phosphate isomerase from Sphingopyxis alaskensis (strain DSM 13593 / LMG 18877 / RB2256) (Sphingomonas alaskensis).